Reading from the N-terminus, the 406-residue chain is L-methionine gamma-lyase (406 aa).

Residues 76–78 (YQR) and 106–107 (GM) each bind pyridoxal 5'-phosphate. L-homocysteine is bound at residue Y132. 219-221 (SAT) lines the pyridoxal 5'-phosphate pocket. K222 is subject to N6-(pyridoxal phosphate)lysine. R380 serves as a coordination point for L-homocysteine. Position 380 (R380) interacts with L-methionine.

This sequence belongs to the trans-sulfuration enzymes family. L-methionine gamma-lyase subfamily. As to quaternary structure, homotetramer. Pyridoxal 5'-phosphate is required as a cofactor.

The enzyme catalyses L-methionine + H2O = methanethiol + 2-oxobutanoate + NH4(+). It catalyses the reaction L-homocysteine + H2O = 2-oxobutanoate + hydrogen sulfide + NH4(+) + H(+). With respect to regulation, is inhibited in vitro by carbonyl reagents, completely inactivated by DL-propargylglycine, and unaffected by metal-chelating agents. Functionally, catalyzes the alpha,gamma-elimination of L-methionine to produce methanethiol, 2-oxobutanoate and ammonia. May be responsible for the production of methanethiol associated with desirable Cheddar-type sulfur notes during cheese ripening. Is also able to catalyze the alpha,gamma-elimination of L-homocysteine and DL-selenomethionine, but has no activity toward L-cysteine, L-cystathionine, S-adenosyl-L-homocysteine and D-methionine. The chain is L-methionine gamma-lyase from Brevibacterium aurantiacum.